We begin with the raw amino-acid sequence, 660 residues long: E3 ubiquitin-protein ligase ORTHRUS 3 (660 aa).

The PHD-type zinc finger occupies 12–63; sequence EGVCMRCKSMPPPEESLTCGTCVTPWHVSCLLSPPETLSATLQWLCPDCSGE. The tract at residues 107–129 is disordered; that stretch reads QLLSGKGVVDEDDEEEKKKTSKG. The RING-type 1 zinc finger occupies 141–197; it reads CSFCMQSLQKPVSVRVLFALALMLVWFLESTPCGHNACLKCFLKWMGQGHRSCGTCR. The YDG domain maps to 285-434; it reads VRNQGLLVGE…CRFLFVRCDN (150 aa). Residues 528–585 form an RING-type 2 zinc finger; it reads CQICQKVMTNPVTTPCAHNFCKACLESKFAGTALVRERGSGGRKLRSQKSVMKCPCCP. Residues 593 to 622 are a coiled coil; that stretch reads QNPQVNREVAEVIEKLKKQEEEENAKSLDE. Composition is skewed to basic and acidic residues over residues 610–621 and 637–646; these read KQEEEENAKSLD and QPKKRIKLDT. The disordered stretch occupies residues 610–660; it reads KQEEEENAKSLDEGQCSGTSHEEEDDEQPKKRIKLDTDAEVSATVVESDMK.

Its subcellular location is the nucleus. It catalyses the reaction S-ubiquitinyl-[E2 ubiquitin-conjugating enzyme]-L-cysteine + [acceptor protein]-L-lysine = [E2 ubiquitin-conjugating enzyme]-L-cysteine + N(6)-ubiquitinyl-[acceptor protein]-L-lysine.. It participates in protein modification; protein ubiquitination. E3 ubiquitin-protein ligase. May participate in CpG methylation-dependent transcriptional regulation. The protein is E3 ubiquitin-protein ligase ORTHRUS 3 (ORTH3) of Arabidopsis thaliana (Mouse-ear cress).